The following is a 217-amino-acid chain: Thiopurine S-methyltransferase (217 aa).

Positions 10, 45, 66, and 123 each coordinate S-adenosyl-L-methionine.

Belongs to the class I-like SAM-binding methyltransferase superfamily. TPMT family.

It is found in the cytoplasm. It catalyses the reaction S-adenosyl-L-methionine + a thiopurine = S-adenosyl-L-homocysteine + a thiopurine S-methylether.. The chain is Thiopurine S-methyltransferase from Pseudomonas fluorescens (strain Pf0-1).